Reading from the N-terminus, the 147-residue chain is D-aminoacyl-tRNA deacylase (147 aa).

Residues 139 to 140 (GP) carry the Gly-cisPro motif, important for rejection of L-amino acids motif.

This sequence belongs to the DTD family. Homodimer.

The protein resides in the cytoplasm. It catalyses the reaction glycyl-tRNA(Ala) + H2O = tRNA(Ala) + glycine + H(+). The catalysed reaction is a D-aminoacyl-tRNA + H2O = a tRNA + a D-alpha-amino acid + H(+). An aminoacyl-tRNA editing enzyme that deacylates mischarged D-aminoacyl-tRNAs. Also deacylates mischarged glycyl-tRNA(Ala), protecting cells against glycine mischarging by AlaRS. Acts via tRNA-based rather than protein-based catalysis; rejects L-amino acids rather than detecting D-amino acids in the active site. By recycling D-aminoacyl-tRNA to D-amino acids and free tRNA molecules, this enzyme counteracts the toxicity associated with the formation of D-aminoacyl-tRNA entities in vivo and helps enforce protein L-homochirality. In Rippkaea orientalis (strain PCC 8801 / RF-1) (Cyanothece sp. (strain PCC 8801)), this protein is D-aminoacyl-tRNA deacylase.